A 160-amino-acid polypeptide reads, in one-letter code: Cytochrome b6-f complex subunit 4 (160 aa).

3 helical membrane-spanning segments follow: residues Leu-36 to Val-56, Leu-95 to Glu-115, and Ala-131 to Ile-151.

The protein belongs to the cytochrome b family. PetD subfamily. The 4 large subunits of the cytochrome b6-f complex are cytochrome b6, subunit IV (17 kDa polypeptide, PetD), cytochrome f and the Rieske protein, while the 4 small subunits are PetG, PetL, PetM and PetN. The complex functions as a dimer.

The protein localises to the cellular thylakoid membrane. Component of the cytochrome b6-f complex, which mediates electron transfer between photosystem II (PSII) and photosystem I (PSI), cyclic electron flow around PSI, and state transitions. The protein is Cytochrome b6-f complex subunit 4 of Rippkaea orientalis (strain PCC 8801 / RF-1) (Cyanothece sp. (strain PCC 8801)).